The primary structure comprises 1165 residues: DNA-directed RNA polymerase III subunit RPC2 (1165 aa).

Residues 1 to 21 (MGVNTAGDPQKSQPKINKGGI) are disordered. Residues Cys-1111, Cys-1114, Cys-1123, and Cys-1126 each contribute to the Zn(2+) site. The C4-type zinc-finger motif lies at 1111-1126 (CGQCGLLGYKGWCNSC).

Belongs to the RNA polymerase beta chain family. Component of the RNA polymerase III (Pol III) complex consisting of 17 subunits.

The protein localises to the nucleus. It catalyses the reaction RNA(n) + a ribonucleoside 5'-triphosphate = RNA(n+1) + diphosphate. DNA-dependent RNA polymerase catalyzes the transcription of DNA into RNA using the four ribonucleoside triphosphates as substrates. Second largest core component of RNA polymerase III which synthesizes small RNAs, such as 5S rRNA and tRNAs. Proposed to contribute to the polymerase catalytic activity and forms the polymerase active center together with the largest subunit. Pol III is composed of mobile elements and RPC2 is part of the core element with the central large cleft and probably a clamp element that moves to open and close the cleft. In Schizosaccharomyces pombe (strain 972 / ATCC 24843) (Fission yeast), this protein is DNA-directed RNA polymerase III subunit RPC2 (rpc2).